The chain runs to 520 residues: Acetylcholine receptor subunit delta (520 aa).

Residues 1 to 24 (MAGPVLTLGLLAALVVCALPGSWG) form the signal peptide. The Extracellular portion of the chain corresponds to 25–248 (LNEEQRLIQH…VTFYLIIRRK (224 aa)). N-linked (GlcNAc...) asparagine glycosylation is found at Asn-100, Asn-167, and Asn-193. The cysteines at positions 154 and 168 are disulfide-linked. A run of 3 helical transmembrane segments spans residues 249 to 273 (PLFY…VFYL), 281 to 299 (TSVA…LLIS), and 315 to 336 (FLLF…VLNI). The Cytoplasmic portion of the chain corresponds to 337–474 (HFRTPSTHVL…WNQVARTVDR (138 aa)). Tyr-393 is subject to Phosphotyrosine; by Tyr-kinases. The helical transmembrane segment at 475-493 (LCLFVVTPVMVVGTAWIFL) threads the bilayer.

It belongs to the ligand-gated ion channel (TC 1.A.9) family. Acetylcholine receptor (TC 1.A.9.1) subfamily. Delta/CHRND sub-subfamily. In terms of assembly, pentamer of two alpha chains, and one each of the beta, delta, and gamma (in immature muscle) or epsilon (in mature muscle) chains. The muscle heteropentamer composed of alpha-1, beta-1, delta, epsilon subunits interacts with the alpha-conotoxin ImII.

The protein localises to the postsynaptic cell membrane. It is found in the cell membrane. The catalysed reaction is K(+)(in) = K(+)(out). It catalyses the reaction Na(+)(in) = Na(+)(out). Its function is as follows. After binding acetylcholine, the AChR responds by an extensive change in conformation that affects all subunits and leads to opening of an ion-conducting channel across the plasma membrane. This Mus musculus (Mouse) protein is Acetylcholine receptor subunit delta (Chrnd).